We begin with the raw amino-acid sequence, 619 residues long: Guanylate cyclase soluble subunit beta-1 (619 aa).

His105 contributes to the heme binding site. Residues 421 to 554 (TILFSGIVGF…NTVNLTSRTE (134 aa)) form the Guanylate cyclase domain.

Belongs to the adenylyl cyclase class-4/guanylyl cyclase family. The active enzyme is formed by a heterodimer of an alpha and a beta subunit. Homotetramer; dimer of dimers (in vitro). Heterodimer with GUCY1A1. Can also form inactive homodimers in vitro. Heme serves as cofactor. In terms of tissue distribution, lung and brain.

It is found in the cytoplasm. It catalyses the reaction GTP = 3',5'-cyclic GMP + diphosphate. With respect to regulation, activated by nitric oxide in the presence of magnesium or manganese ions. Mediates responses to nitric oxide (NO) by catalyzing the biosynthesis of the signaling molecule cGMP. This chain is Guanylate cyclase soluble subunit beta-1 (Gucy1b1), found in Rattus norvegicus (Rat).